The chain runs to 261 residues: Small ribosomal subunit protein uS2 (261 aa).

This sequence belongs to the universal ribosomal protein uS2 family.

The protein is Small ribosomal subunit protein uS2 of Rhodospirillum centenum (strain ATCC 51521 / SW).